A 63-amino-acid polypeptide reads, in one-letter code: Keratin-associated protein 19-8 (63 aa).

Belongs to the KRTAP type 19 family. In terms of assembly, interacts with hair keratins.

In the hair cortex, hair keratin intermediate filaments are embedded in an interfilamentous matrix, consisting of hair keratin-associated proteins (KRTAP), which are essential for the formation of a rigid and resistant hair shaft through their extensive disulfide bond cross-linking with abundant cysteine residues of hair keratins. The matrix proteins include the high-sulfur and high-glycine-tyrosine keratins. In Homo sapiens (Human), this protein is Keratin-associated protein 19-8 (KRTAP19-8).